Here is a 382-residue protein sequence, read N- to C-terminus: tRNA (guanine(26)-N(2))-dimethyltransferase (382 aa).

The 367-residue stretch at 4–370 (TEVIEGKARL…REFSEILECV (367 aa)) folds into the Trm1 methyltransferase domain. Arg-44, Arg-69, Asp-87, Asp-113, and Ala-114 together coordinate S-adenosyl-L-methionine. Zn(2+) is bound by residues Cys-244, Cys-247, Cys-261, and Cys-264.

This sequence belongs to the class I-like SAM-binding methyltransferase superfamily. Trm1 family.

The catalysed reaction is guanosine(26) in tRNA + 2 S-adenosyl-L-methionine = N(2)-dimethylguanosine(26) in tRNA + 2 S-adenosyl-L-homocysteine + 2 H(+). Its function is as follows. Dimethylates a single guanine residue at position 26 of a number of tRNAs using S-adenosyl-L-methionine as donor of the methyl groups. The protein is tRNA (guanine(26)-N(2))-dimethyltransferase of Metallosphaera sedula (strain ATCC 51363 / DSM 5348 / JCM 9185 / NBRC 15509 / TH2).